We begin with the raw amino-acid sequence, 303 residues long: 4-hydroxy-3-methylbut-2-enyl diphosphate reductase (303 aa).

Position 12 (cysteine 12) interacts with [4Fe-4S] cluster. 2 residues coordinate (2E)-4-hydroxy-3-methylbut-2-enyl diphosphate: histidine 42 and histidine 75. Dimethylallyl diphosphate contacts are provided by histidine 42 and histidine 75. 2 residues coordinate isopentenyl diphosphate: histidine 42 and histidine 75. A [4Fe-4S] cluster-binding site is contributed by cysteine 97. Residue histidine 125 coordinates (2E)-4-hydroxy-3-methylbut-2-enyl diphosphate. Position 125 (histidine 125) interacts with dimethylallyl diphosphate. Histidine 125 lines the isopentenyl diphosphate pocket. Catalysis depends on glutamate 127, which acts as the Proton donor. Serine 164 provides a ligand contact to (2E)-4-hydroxy-3-methylbut-2-enyl diphosphate. Cysteine 192 provides a ligand contact to [4Fe-4S] cluster. Residues serine 220, serine 221, asparagine 222, and serine 264 each contribute to the (2E)-4-hydroxy-3-methylbut-2-enyl diphosphate site. Serine 220, serine 221, asparagine 222, and serine 264 together coordinate dimethylallyl diphosphate. 4 residues coordinate isopentenyl diphosphate: serine 220, serine 221, asparagine 222, and serine 264.

It belongs to the IspH family. Requires [4Fe-4S] cluster as cofactor.

The enzyme catalyses isopentenyl diphosphate + 2 oxidized [2Fe-2S]-[ferredoxin] + H2O = (2E)-4-hydroxy-3-methylbut-2-enyl diphosphate + 2 reduced [2Fe-2S]-[ferredoxin] + 2 H(+). It catalyses the reaction dimethylallyl diphosphate + 2 oxidized [2Fe-2S]-[ferredoxin] + H2O = (2E)-4-hydroxy-3-methylbut-2-enyl diphosphate + 2 reduced [2Fe-2S]-[ferredoxin] + 2 H(+). Its pathway is isoprenoid biosynthesis; dimethylallyl diphosphate biosynthesis; dimethylallyl diphosphate from (2E)-4-hydroxy-3-methylbutenyl diphosphate: step 1/1. The protein operates within isoprenoid biosynthesis; isopentenyl diphosphate biosynthesis via DXP pathway; isopentenyl diphosphate from 1-deoxy-D-xylulose 5-phosphate: step 6/6. Its function is as follows. Catalyzes the conversion of 1-hydroxy-2-methyl-2-(E)-butenyl 4-diphosphate (HMBPP) into a mixture of isopentenyl diphosphate (IPP) and dimethylallyl diphosphate (DMAPP). Acts in the terminal step of the DOXP/MEP pathway for isoprenoid precursor biosynthesis. The chain is 4-hydroxy-3-methylbut-2-enyl diphosphate reductase from Neorickettsia sennetsu (strain ATCC VR-367 / Miyayama) (Ehrlichia sennetsu).